The sequence spans 375 residues: Growth/differentiation factor 8 (375 aa).

An N-terminal signal peptide occupies residues 1 to 23 (MQKLAVYVYIYLFMQIAVDPVAL). The propeptide occupies 24–266 (DGSSQPTENA…VTDTPKRSRR (243 aa)). Asparagine 71 carries an N-linked (GlcNAc...) asparagine glycan. Disulfide bonds link cysteine 272–cysteine 282, cysteine 281–cysteine 340, cysteine 309–cysteine 372, and cysteine 313–cysteine 374.

The protein belongs to the TGF-beta family. As to quaternary structure, homodimer; disulfide-linked.

It is found in the secreted. Its function is as follows. Acts specifically as a negative regulator of skeletal muscle growth. The polypeptide is Growth/differentiation factor 8 (MSTN) (Gallus gallus (Chicken)).